The following is a 205-amino-acid chain: MDVLQKLKNNQRRIGLTGGIASGKSTITNYIRKHKNIPILDADNLSRELIKPNTYGYKKILDYFGNQIIDTKNNSEKAINRKLLRNIIFKHSESKEWIDNLLHPLVKEKMIEECIQYKNNQTIVLVIPLLFEAKFEDICTEIWLVKCPRELQKKRLITRDKISEKEAYETINLQLSFEEKSKFSDIILDNSDDQNKWINTIREIL.

In terms of domain architecture, DPCK spans 13–205 (RIGLTGGIAS…KWINTIREIL (193 aa)). Residue 21-26 (ASGKST) participates in ATP binding.

This sequence belongs to the CoaE family.

Its subcellular location is the cytoplasm. The catalysed reaction is 3'-dephospho-CoA + ATP = ADP + CoA + H(+). It participates in cofactor biosynthesis; coenzyme A biosynthesis; CoA from (R)-pantothenate: step 5/5. Catalyzes the phosphorylation of the 3'-hydroxyl group of dephosphocoenzyme A to form coenzyme A. The polypeptide is Dephospho-CoA kinase (Prochlorococcus marinus (strain MIT 9312)).